We begin with the raw amino-acid sequence, 90 residues long: UPF0335 protein RPA4190 (90 aa).

Belongs to the UPF0335 family.

The polypeptide is UPF0335 protein RPA4190 (Rhodopseudomonas palustris (strain ATCC BAA-98 / CGA009)).